The primary structure comprises 371 residues: Queuine tRNA-ribosyltransferase (371 aa).

Residue Asp93 is the Proton acceptor of the active site. Substrate contacts are provided by residues 93–97 (DSGGF), Asp147, Gln191, and Gly218. Positions 249–255 (GVGTPLD) are RNA binding. Asp268 (nucleophile) is an active-site residue. Residues 273–277 (TRNAR) are RNA binding; important for wobble base 34 recognition. Zn(2+) contacts are provided by Cys306, Cys308, Cys311, and His337.

The protein belongs to the queuine tRNA-ribosyltransferase family. Homodimer. Within each dimer, one monomer is responsible for RNA recognition and catalysis, while the other monomer binds to the replacement base PreQ1. The cofactor is Zn(2+).

The enzyme catalyses 7-aminomethyl-7-carbaguanine + guanosine(34) in tRNA = 7-aminomethyl-7-carbaguanosine(34) in tRNA + guanine. The protein operates within tRNA modification; tRNA-queuosine biosynthesis. Catalyzes the base-exchange of a guanine (G) residue with the queuine precursor 7-aminomethyl-7-deazaguanine (PreQ1) at position 34 (anticodon wobble position) in tRNAs with GU(N) anticodons (tRNA-Asp, -Asn, -His and -Tyr). Catalysis occurs through a double-displacement mechanism. The nucleophile active site attacks the C1' of nucleotide 34 to detach the guanine base from the RNA, forming a covalent enzyme-RNA intermediate. The proton acceptor active site deprotonates the incoming PreQ1, allowing a nucleophilic attack on the C1' of the ribose to form the product. After dissociation, two additional enzymatic reactions on the tRNA convert PreQ1 to queuine (Q), resulting in the hypermodified nucleoside queuosine (7-(((4,5-cis-dihydroxy-2-cyclopenten-1-yl)amino)methyl)-7-deazaguanosine). The protein is Queuine tRNA-ribosyltransferase of Lawsonia intracellularis (strain PHE/MN1-00).